Here is a 198-residue protein sequence, read N- to C-terminus: NAD(P)H dehydrogenase (quinone) (198 aa).

Residues 4–190 (VLVLYYSAYG…EGAKYQGAHV (187 aa)) form the Flavodoxin-like domain. FMN is bound by residues 10–15 (SAYGHI) and 78–80 (TRF). Y12 is a binding site for NAD(+). W98 is a binding site for substrate. FMN is bound by residues 113 to 119 (SSATQHG) and H134.

This sequence belongs to the WrbA family. It depends on FMN as a cofactor.

The enzyme catalyses a quinone + NADH + H(+) = a quinol + NAD(+). It catalyses the reaction a quinone + NADPH + H(+) = a quinol + NADP(+). This chain is NAD(P)H dehydrogenase (quinone), found in Rhizobium johnstonii (strain DSM 114642 / LMG 32736 / 3841) (Rhizobium leguminosarum bv. viciae).